We begin with the raw amino-acid sequence, 877 residues long: MNDMYAALRGNVGMLGHLLGKTIKEHLGDEFLDKIENIRQLAKSSRQGNEEDRQKLITTLKNLSDDELLPVARAFSQFLNLANVAEQFHSMSRQGELHTTLDPLDSLFDKLKNANLSEQEIIDTVCELDIELVLTAHPTEVTRRTLIHKHVQLNECLEELELQDLTPRECKFIQHRIEQLVNQSWHTNEIREQRPTPVDEAKWGFAVIENNLWPAIPLFLRQLDDRLQENFGIRLPLRAHPVRIASWMGGDRDGNPFVTAKVTQEVLLLSRWVAINLFLTDIQELVSELSMTDCNEELRQRVGECSEPYRAILRVVRDSLRETQQAVTAKLQGQYTENRDLITRTEQLREPLELCYRSLQSCGMSIIADGMLLDVLRKLACFGVNLLKLDIRQDGERHGQVLSELTQYLELGDYAEWRETEKQEFLLKELASRRPLLPANWQPSAESQEVVDTCRVIAQTDPDAFGIYIISMARQPSDVLAVQLLLKEVGCKFHMPIAPLFETQNDLQNAAAVLNRLLSVEWYRNYIRGQQYVMIGYSDSAKDAGMMSAGWAQYRAMEDLVAIAEREDLKLTLFHGRGGTIGRGGGPAHQAILSQPPGSLKGGFRVTEQGEMIRFKFGLPEVAIHNFKLYTSAVLEANLLPPPKPEAAWYDVMDKLSEISCQHYRSIVRDEPDFVPYFRAATPEMELGKLPLGSRPSKRKPNGGVESLRAIPWIFAWTQNRLMLPSWLGAHVALQAVMDEGKEDLLKEMDQQWPFFHTRLEMLEMVFLKADLWLAEYYDLRLAPENLWPLGKRLRQELQDSINVVLQLLPKRGELLDDQPWIKESIKLRNPYTDPLNVLQVELLHRSRATPDEVNPQVDQALMVTIAGIAAGMRNTG.

Residues His-137 and Lys-542 contribute to the active site.

It belongs to the PEPCase type 1 family. Mg(2+) is required as a cofactor.

The catalysed reaction is oxaloacetate + phosphate = phosphoenolpyruvate + hydrogencarbonate. Functionally, forms oxaloacetate, a four-carbon dicarboxylic acid source for the tricarboxylic acid cycle. The chain is Phosphoenolpyruvate carboxylase from Tolumonas auensis (strain DSM 9187 / NBRC 110442 / TA 4).